The chain runs to 344 residues: Protein BREVIS RADIX (344 aa).

In terms of domain architecture, BRX 1 spans 139-194 (KEWMAQVEPGVHITFASLPTGGNDLKRIRFSREMFDKWQAQRWWGENYDKIVELYN). The tract at residues 203–286 (LQTPARSDDQ…DPPSMSNASE (84 aa)) is disordered. The segment covering 223–233 (DSARESKDWTP) has biased composition (basic and acidic residues). A compositionally biased stretch (low complexity) spans 248–264 (YGGSSNYGPGSYHGGPP). The BRX 2 domain maps to 289–344 (AEWIEEDEPGVYITIRQLSDGTRELRRVRFSRERFGEVHAKTWWEQNRERIQTQYL).

This sequence belongs to the BRX family. Homodimer and heterodimer with BRXL1. Interacts with NGA1 and ARF5. As to expression, expressed in the developing protophloem up to the elongation zone in root meristem of young seedlings, in the columella and the phloem vasculature throughout the root and in the phloem vasculature in the shoot. Detected in the shoot meristem and in primordia. Low expression in stomata. Confined to sieve element precursor cells and to protophloem.

The protein localises to the nucleus. It is found in the cell membrane. Functionally, acts as a regulator of cell proliferation and elongation in the root and shoot. Regulates roots architecture and primary root protophloem differentiation. BRX, BAM3, and CLE45 act together to regulate the transition of protophloem cells from proliferation to differentiation, thus impinging on postembryonic growth capacity of the root meristem. Probable transcription regulator. Regulated by the auxin response factor ARF5. Polarly localized in vascular cells and subject to endocytic recycling. Required for CPD expression and for correct nuclear auxin response. Mediates cross-talk between the auxin and brassinosteroid pathways. BRX is a target for auxin-induced, proteasome-mediated degradation. The chain is Protein BREVIS RADIX from Arabidopsis thaliana (Mouse-ear cress).